The sequence spans 291 residues: Aspartate carbamoyltransferase catalytic subunit (291 aa).

Residues Arg-47 and Thr-48 each coordinate carbamoyl phosphate. An L-aspartate-binding site is contributed by Lys-75. Carbamoyl phosphate-binding residues include Arg-97, His-126, and Gln-129. L-aspartate contacts are provided by Arg-159 and Arg-213. The carbamoyl phosphate site is built by Gly-251 and Pro-252.

Belongs to the aspartate/ornithine carbamoyltransferase superfamily. ATCase family. As to quaternary structure, heterododecamer (2C3:3R2) of six catalytic PyrB chains organized as two trimers (C3), and six regulatory PyrI chains organized as three dimers (R2).

The enzyme catalyses carbamoyl phosphate + L-aspartate = N-carbamoyl-L-aspartate + phosphate + H(+). Its pathway is pyrimidine metabolism; UMP biosynthesis via de novo pathway; (S)-dihydroorotate from bicarbonate: step 2/3. Its function is as follows. Catalyzes the condensation of carbamoyl phosphate and aspartate to form carbamoyl aspartate and inorganic phosphate, the committed step in the de novo pyrimidine nucleotide biosynthesis pathway. The sequence is that of Aspartate carbamoyltransferase catalytic subunit from Aquifex aeolicus (strain VF5).